Reading from the N-terminus, the 276-residue chain is MGIKVYKPTTNGRRNMTGSDFAEITTSTPEKSLLVSMSKTAGRNNTGRITVRHHGGGHKRKYRMIDFKRTTDNVVAKVATIEYDPNRTANIALIVYANGVKSYILAAKGLEVGMTVVSGPDADIKVGNALPLANIPVGTLIHNIELKPGKGGQLVRSAGASAQVLGSEGKYTLVRLQSGEVRMILSTCRATIGVVGNEQQSLINLGKAGRTRHMGIRPTVRGSVMNPNDHPHGGGEGRQPVGRKSPMTPWGKPALGLKTRNKKAKSSKLIVRRIND.

The disordered stretch occupies residues 219 to 268; it reads TVRGSVMNPNDHPHGGGEGRQPVGRKSPMTPWGKPALGLKTRNKKAKSSK.

It belongs to the universal ribosomal protein uL2 family. Part of the 50S ribosomal subunit. Forms a bridge to the 30S subunit in the 70S ribosome.

Its function is as follows. One of the primary rRNA binding proteins. Required for association of the 30S and 50S subunits to form the 70S ribosome, for tRNA binding and peptide bond formation. It has been suggested to have peptidyltransferase activity; this is somewhat controversial. Makes several contacts with the 16S rRNA in the 70S ribosome. The chain is Large ribosomal subunit protein uL2 from Lactococcus lactis subsp. cremoris (strain MG1363).